Reading from the N-terminus, the 423-residue chain is Imidazolonepropionase (423 aa).

Fe(3+) is bound by residues histidine 78 and histidine 80. Residues histidine 78 and histidine 80 each contribute to the Zn(2+) site. 3 residues coordinate 4-imidazolone-5-propanoate: arginine 87, tyrosine 150, and histidine 183. An N-formimidoyl-L-glutamate-binding site is contributed by tyrosine 150. Residue histidine 247 participates in Fe(3+) binding. Position 247 (histidine 247) interacts with Zn(2+). Position 250 (glutamate 250) interacts with 4-imidazolone-5-propanoate. Aspartate 322 is a binding site for Fe(3+). Aspartate 322 provides a ligand contact to Zn(2+). The N-formimidoyl-L-glutamate site is built by asparagine 324 and glycine 326. Serine 327 is a 4-imidazolone-5-propanoate binding site.

It belongs to the metallo-dependent hydrolases superfamily. HutI family. It depends on Zn(2+) as a cofactor. The cofactor is Fe(3+).

Its subcellular location is the cytoplasm. It carries out the reaction 4-imidazolone-5-propanoate + H2O = N-formimidoyl-L-glutamate. The protein operates within amino-acid degradation; L-histidine degradation into L-glutamate; N-formimidoyl-L-glutamate from L-histidine: step 3/3. Functionally, catalyzes the hydrolytic cleavage of the carbon-nitrogen bond in imidazolone-5-propanoate to yield N-formimidoyl-L-glutamate. It is the third step in the universal histidine degradation pathway. In Bacillus cereus (strain ATCC 14579 / DSM 31 / CCUG 7414 / JCM 2152 / NBRC 15305 / NCIMB 9373 / NCTC 2599 / NRRL B-3711), this protein is Imidazolonepropionase.